A 479-amino-acid chain; its full sequence is GTPase Der (479 aa).

EngA-type G domains are found at residues 3-166 (PVVA…AEEY) and 192-365 (LKLA…ASAT). GTP contacts are provided by residues 9 to 16 (GRPNVGKS), 56 to 60 (DTGGI), 118 to 121 (NKID), 198 to 205 (GRPNVGKS), 245 to 249 (DTAGV), and 310 to 313 (NKWD). A KH-like domain is found at 366 to 450 (QRISTSKLTK…PIKVEFREPV (85 aa)).

It belongs to the TRAFAC class TrmE-Era-EngA-EngB-Septin-like GTPase superfamily. EngA (Der) GTPase family. As to quaternary structure, associates with the 50S ribosomal subunit.

In terms of biological role, GTPase that plays an essential role in the late steps of ribosome biogenesis. This chain is GTPase Der, found in Idiomarina loihiensis (strain ATCC BAA-735 / DSM 15497 / L2-TR).